A 529-amino-acid polypeptide reads, in one-letter code: MNNARPIRRALLSVSDKTGILEFAQALHAQGVELLSTGGTARLLADNGVPVIEVSDYTGHPEIMDGRVKTLHPKVHGGILARRGIDEIVMEQNNIKPIDLVAVNLYPFAATVAQEGCTLADAIENIDIGGPTMVRSTAKNHKDTTIIVNAKDYGRVIAEMQSNEASTTLETRFDLAIAAFEHTAAYDGMIANYFGTKVPAHSNDECHEDSKFPRTYNTQLVKKQDLRYGENSHQTAAFYVDTNLDEASVATAVQLQGKALSYNNIADTDSALECVKEFDEPACVIVKHANPCGVAIGENLLEAYNRAFQTDPTSAFGGIIAFNGELDAATASAIVERQFVEVIIAPKVSQAARDVIAAKANVRLLECGEWAAKTTSLDYKRVNGGLLLQDRDQGMVGLDDVKVVSKRQPTAEEMKDLMFCWKVAKFVKSNAIVYAKNSMTIGVGAGQMSRVYSAKVAGIKAADEGLEVQNSVMASDAFFPFRDGIDAAAEAGISCIIQPGGSIRDEEIIAAADEHGMAMVFTGMRHFRH.

An MGS-like domain is found at 1–148 (MNNARPIRRA…KNHKDTTIIV (148 aa)).

It belongs to the PurH family.

It carries out the reaction (6R)-10-formyltetrahydrofolate + 5-amino-1-(5-phospho-beta-D-ribosyl)imidazole-4-carboxamide = 5-formamido-1-(5-phospho-D-ribosyl)imidazole-4-carboxamide + (6S)-5,6,7,8-tetrahydrofolate. The enzyme catalyses IMP + H2O = 5-formamido-1-(5-phospho-D-ribosyl)imidazole-4-carboxamide. The protein operates within purine metabolism; IMP biosynthesis via de novo pathway; 5-formamido-1-(5-phospho-D-ribosyl)imidazole-4-carboxamide from 5-amino-1-(5-phospho-D-ribosyl)imidazole-4-carboxamide (10-formyl THF route): step 1/1. Its pathway is purine metabolism; IMP biosynthesis via de novo pathway; IMP from 5-formamido-1-(5-phospho-D-ribosyl)imidazole-4-carboxamide: step 1/1. This chain is Bifunctional purine biosynthesis protein PurH, found in Shewanella pealeana (strain ATCC 700345 / ANG-SQ1).